Consider the following 263-residue polypeptide: Kallikrein 1-related peptidase b27 (263 aa).

Residues 1 to 17 (MRFLILFLALSLGGIDA) form the signal peptide. Residues 18-24 (APPVQSR) constitute a propeptide, activation peptide. Positions 25–260 (IIGGFKCKKN…FTSWIKDTMA (236 aa)) constitute a Peptidase S1 domain. 5 disulfides stabilise this stretch: cysteine 31-cysteine 175, cysteine 50-cysteine 66, cysteine 154-cysteine 221, cysteine 186-cysteine 200, and cysteine 211-cysteine 236. Catalysis depends on histidine 65, which acts as the Charge relay system. 2 N-linked (GlcNAc...) asparagine glycosylation sites follow: asparagine 69 and asparagine 105. The active-site Charge relay system is aspartate 122. Serine 215 (charge relay system) is an active-site residue.

Belongs to the peptidase S1 family. Kallikrein subfamily. As to expression, expressed in testis and submaxillary gland. Not expressed in heart, brain, spleen, lung, liver, muscle, kidney and ovary. In the testis, expression localized specifically to Leydig cells in the interstitial tissues.

With respect to regulation, strongly inhibited by protease inhibitors diisopropyl fluorophosphate, phenylmethanesulfonyl fluoride and SBTI. In terms of biological role, serine protease with chymotrypsin-like cleavage specificity. Shows activity towards casein, gelatin, IGFBP3 and fibronectin but not towards laminin or collagens I and IV. Does not hydrolyze kininogin to release Lys-bradykinin. The sequence is that of Kallikrein 1-related peptidase b27 (Klk1b27) from Mus musculus (Mouse).